The sequence spans 126 residues: Holo-[acyl-carrier-protein] synthase (126 aa).

Residues D9 and E58 each coordinate Mg(2+).

This sequence belongs to the P-Pant transferase superfamily. AcpS family. Mg(2+) serves as cofactor.

It localises to the cytoplasm. It carries out the reaction apo-[ACP] + CoA = holo-[ACP] + adenosine 3',5'-bisphosphate + H(+). In terms of biological role, transfers the 4'-phosphopantetheine moiety from coenzyme A to a Ser of acyl-carrier-protein. This is Holo-[acyl-carrier-protein] synthase from Buchnera aphidicola subsp. Cinara cedri (strain Cc).